A 108-amino-acid chain; its full sequence is uncharacterized protein (108 aa).

The tract at residues Thr-81–Ile-108 is disordered. Low complexity predominate over residues His-83–Gln-99.

This is an uncharacterized protein from Dictyostelium discoideum (Social amoeba).